A 179-amino-acid chain; its full sequence is MSRIGKKPIDIPKGVEVKVGEGNFVTVKGPKGELSYKFNPELKINVEENQVKVERPNDSSFMRAIHGTTRALIANMIKGVTEGFTVELEIVGIGYRANMKGKAIELQLGYSHPIHFEPPEGVQIAVEGNIIKVSGIDKQKVGQVAAKIRDFRKPDPYKGKGIRYKGEVIKLKAGKSVGK.

This sequence belongs to the universal ribosomal protein uL6 family. As to quaternary structure, part of the 50S ribosomal subunit.

In terms of biological role, this protein binds to the 23S rRNA, and is important in its secondary structure. It is located near the subunit interface in the base of the L7/L12 stalk, and near the tRNA binding site of the peptidyltransferase center. The chain is Large ribosomal subunit protein uL6 from Persephonella marina (strain DSM 14350 / EX-H1).